Consider the following 76-residue polypeptide: Probable insulin-like peptide alpha-type 1 (76 aa).

Residues 1 to 24 form the signal peptide; the sequence is MKTYSFFVLFIVFIFFISSSKSHS. Intrachain disulfides connect cysteine 32-cysteine 60, cysteine 44-cysteine 73, and cysteine 48-cysteine 74.

The protein belongs to the insulin family.

Its subcellular location is the secreted. The protein is Probable insulin-like peptide alpha-type 1 (ins-21) of Caenorhabditis elegans.